The primary structure comprises 251 residues: 4-hydroxy-tetrahydrodipicolinate reductase (251 aa).

NAD(+) is bound by residues 8-13, 76-78, and 106-109; these read GAKGRM, GTT, and APNF. The active-site Proton donor/acceptor is His-136. His-137 lines the (S)-2,3,4,5-tetrahydrodipicolinate pocket. The active-site Proton donor is Lys-140. (S)-2,3,4,5-tetrahydrodipicolinate is bound at residue 146–147; sequence GT.

Belongs to the DapB family.

The protein localises to the cytoplasm. It catalyses the reaction (S)-2,3,4,5-tetrahydrodipicolinate + NAD(+) + H2O = (2S,4S)-4-hydroxy-2,3,4,5-tetrahydrodipicolinate + NADH + H(+). The catalysed reaction is (S)-2,3,4,5-tetrahydrodipicolinate + NADP(+) + H2O = (2S,4S)-4-hydroxy-2,3,4,5-tetrahydrodipicolinate + NADPH + H(+). It functions in the pathway amino-acid biosynthesis; L-lysine biosynthesis via DAP pathway; (S)-tetrahydrodipicolinate from L-aspartate: step 4/4. Catalyzes the conversion of 4-hydroxy-tetrahydrodipicolinate (HTPA) to tetrahydrodipicolinate. The polypeptide is 4-hydroxy-tetrahydrodipicolinate reductase (Bifidobacterium longum subsp. infantis (strain ATCC 15697 / DSM 20088 / JCM 1222 / NCTC 11817 / S12)).